Reading from the N-terminus, the 217-residue chain is HTH-type transcriptional regulator EthR (217 aa).

The segment at methionine 1 to aspartate 22 is disordered. The HTH tetR-type domain maps to aspartate 21–alanine 81. The H-T-H motif DNA-binding region spans serine 44–phenylalanine 63.

In terms of assembly, homodimer.

Functionally, involved in the repression of teh monooxygenase EthA which is responsible of the formation of the active metabolite of ethionamide (ETH). The sequence is that of HTH-type transcriptional regulator EthR (ethR) from Mycolicibacterium smegmatis (strain ATCC 700084 / mc(2)155) (Mycobacterium smegmatis).